The chain runs to 143 residues: Transcriptional regulator MraZ (143 aa).

SpoVT-AbrB domains are found at residues 5–47 (SHTP…PLAE) and 76–119 (ASDD…DSQR).

It belongs to the MraZ family. As to quaternary structure, forms oligomers.

Its subcellular location is the cytoplasm. It localises to the nucleoid. The sequence is that of Transcriptional regulator MraZ from Parafrankia sp. (strain EAN1pec).